Consider the following 370-residue polypeptide: Histidinol-phosphate aminotransferase 1 (370 aa).

Lys-222 is subject to N6-(pyridoxal phosphate)lysine.

Belongs to the class-II pyridoxal-phosphate-dependent aminotransferase family. Histidinol-phosphate aminotransferase subfamily. Homodimer. Pyridoxal 5'-phosphate is required as a cofactor.

It catalyses the reaction L-histidinol phosphate + 2-oxoglutarate = 3-(imidazol-4-yl)-2-oxopropyl phosphate + L-glutamate. The protein operates within amino-acid biosynthesis; L-histidine biosynthesis; L-histidine from 5-phospho-alpha-D-ribose 1-diphosphate: step 7/9. This Bacillus cereus (strain ATCC 14579 / DSM 31 / CCUG 7414 / JCM 2152 / NBRC 15305 / NCIMB 9373 / NCTC 2599 / NRRL B-3711) protein is Histidinol-phosphate aminotransferase 1 (hisC1).